The following is a 190-amino-acid chain: Elongation factor P (190 aa).

The protein belongs to the elongation factor P family.

The protein resides in the cytoplasm. It functions in the pathway protein biosynthesis; polypeptide chain elongation. Functionally, involved in peptide bond synthesis. Stimulates efficient translation and peptide-bond synthesis on native or reconstituted 70S ribosomes in vitro. Probably functions indirectly by altering the affinity of the ribosome for aminoacyl-tRNA, thus increasing their reactivity as acceptors for peptidyl transferase. The sequence is that of Elongation factor P (efp) from Mycoplasma pneumoniae (strain ATCC 29342 / M129 / Subtype 1) (Mycoplasmoides pneumoniae).